Here is a 349-residue protein sequence, read N- to C-terminus: Magnesium-protoporphyrin IX monomethyl ester [oxidative] cyclase (349 aa).

The protein belongs to the AcsF family. Fe cation is required as a cofactor.

Its subcellular location is the plastid. It is found in the chloroplast. The enzyme catalyses Mg-protoporphyrin IX 13-monomethyl ester + 3 NADPH + 3 O2 + 2 H(+) = 3,8-divinyl protochlorophyllide a + 3 NADP(+) + 5 H2O. It functions in the pathway porphyrin-containing compound metabolism; chlorophyll biosynthesis (light-independent). Its function is as follows. Catalyzes the formation of the isocyclic ring in chlorophyll biosynthesis. Mediates the cyclase reaction, which results in the formation of divinylprotochlorophyllide (Pchlide) characteristic of all chlorophylls from magnesium-protoporphyrin IX 13-monomethyl ester (MgPMME). The chain is Magnesium-protoporphyrin IX monomethyl ester [oxidative] cyclase from Porphyra purpurea (Red seaweed).